The primary structure comprises 660 residues: MGKLKKKGQSGQAKNYITRTQAVKKLQLSLPDFRKLCIWKGIYPREPRSRKKVSKSATASTTFYYTKDIQYLLHEPLLQKFRDQKVLEKKISRALGRGDVGDAARLERNAARPDKTGKPRYTLNHVIRERYPTFIDALRDLDDCLSMLFLFANLPSTTAVPAKMIARCERLCLEFEHYLITSHSLRKSFLSIKGIYYQASIQGEDILWLVPYKFNQRVVGDVDFRIMGTFVEFYMTLLGFVNYRLYTAVGLKYPPKFDQLKDDQGAELGAFALEGVNIATNDDTKAITNGEAEHGPDPKVQAEVDKIVQQLRVESDDKASEEGPADDVEGEEKPSDAIDKFEPVAPGGDVLPQPSYSSSDPAQLFSRLTFFLSRETPRQSLEFILRAFGCKRIGWDSVLGEGSFTTDESDPSITHQIVDRPVVQAAMNEEGDGEDNQTSQKVGPNHRYPGRLYVQPQWVWDSVNDEELKSPELYGPGAALPPHLSPFVKPTQGQYDPTIPLEEQQSEGEAIDAELEDANEEAGEESDVENDMDVASDEDEEEEDEEEFDGVSVSEEEEGSEDEEESATLQRQRELEAEISGKSVKGDKKMDAKTKAKLEAKKALERKKKSEAEDLERAKGMLSKKKRKLFEQMQYTNNKKSAEDLKLRQKRRRLEKEKKA.

Disordered stretches follow at residues 313–358 and 471–660; these read VESD…SYSS and PELY…EKKA. The segment covering 331 to 342 has biased composition (basic and acidic residues); sequence EEKPSDAIDKFE. One can recognise a BRCT domain in the interval 360–476; the sequence is DPAQLFSRLT…ELKSPELYGP (117 aa). Positions 501 to 659 form a coiled coil; that stretch reads LEEQQSEGEA…KRRRLEKEKK (159 aa). Residues 504-566 show a composition bias toward acidic residues; that stretch reads QQSEGEAIDA…EEGSEDEEES (63 aa). The span at 584–619 shows a compositional bias: basic and acidic residues; that stretch reads VKGDKKMDAKTKAKLEAKKALERKKKSEAEDLERAK.

This sequence belongs to the pescadillo family. Component of the NOP7 complex, composed of ERB1, NOP7 and YTM1. The complex is held together by ERB1, which interacts with NOP7 via its N-terminal domain and with YTM1 via a high-affinity interaction between the seven-bladed beta-propeller domains of the 2 proteins. The NOP7 complex associates with the 66S pre-ribosome.

Its subcellular location is the nucleus. The protein localises to the nucleolus. It localises to the nucleoplasm. Its function is as follows. Component of the NOP7 complex, which is required for maturation of the 25S and 5.8S ribosomal RNAs and formation of the 60S ribosome. This is Pescadillo homolog from Chaetomium globosum (strain ATCC 6205 / CBS 148.51 / DSM 1962 / NBRC 6347 / NRRL 1970) (Soil fungus).